The sequence spans 314 residues: Methionyl-tRNA formyltransferase (314 aa).

Position 112–115 (112–115 (SLLP)) interacts with (6S)-5,6,7,8-tetrahydrofolate.

This sequence belongs to the Fmt family.

The enzyme catalyses L-methionyl-tRNA(fMet) + (6R)-10-formyltetrahydrofolate = N-formyl-L-methionyl-tRNA(fMet) + (6S)-5,6,7,8-tetrahydrofolate + H(+). Functionally, attaches a formyl group to the free amino group of methionyl-tRNA(fMet). The formyl group appears to play a dual role in the initiator identity of N-formylmethionyl-tRNA by promoting its recognition by IF2 and preventing the misappropriation of this tRNA by the elongation apparatus. In Buchnera aphidicola subsp. Acyrthosiphon pisum (strain 5A), this protein is Methionyl-tRNA formyltransferase.